The following is a 177-amino-acid chain: Large ribosomal subunit protein bL9 (177 aa).

The disordered stretch occupies residues 151 to 177 (EDEEIAEAAPVAEAQAEADGHSTEETA). Over residues 157–167 (EAAPVAEAQAE) the composition is skewed to low complexity. Positions 168-177 (ADGHSTEETA) are enriched in basic and acidic residues.

The protein belongs to the bacterial ribosomal protein bL9 family.

In terms of biological role, binds to the 23S rRNA. The protein is Large ribosomal subunit protein bL9 of Solidesulfovibrio magneticus (strain ATCC 700980 / DSM 13731 / RS-1) (Desulfovibrio magneticus).